The following is a 340-amino-acid chain: uncharacterized protein (340 aa).

This is an uncharacterized protein from Enterobacteria phage T4 (Bacteriophage T4).